The sequence spans 71 residues: uncharacterized protein (71 aa).

A compositionally biased stretch (basic residues) spans Met-1 to Asn-16. Disordered regions lie at residues Met-1–Lys-39 and Lys-51–Ala-71. A compositionally biased stretch (polar residues) spans Arg-25–Gly-35. Positions Lys-51–Phe-64 are enriched in basic and acidic residues.

This is an uncharacterized protein from Bacillus subtilis (strain 168).